Reading from the N-terminus, the 810-residue chain is Chloride channel protein (810 aa).

At 2 to 48 the chain is on the cytoplasmic side; that stretch reads SHEKNEASGNPEAQSWKAQEAMLGVKTEVSRWRAVKNCLYRHLVKVL. 2 helical membrane passes run 49 to 86 and 93 to 116; these read GEDWIFLLLLGALMALVSWAMDFIGSRGLRFYKYLFAM and LQYLVWVCYPLILILFSSLFCQIV. A Selectivity filter part_1 motif is present at residues 122–126; sequence GSGIP. Serine 123 provides a ligand contact to chloride. The helical intramembrane region spans 125-132; it reads IPELKTII. 2 helical membrane-spanning segments follow: residues 141–160 and 166–184; these read LTLRTFVAKTVGLTVALSAG and EGPFVHIASICATLLNQLL. The short motif at 164-168 is the Selectivity filter part_2 element; that stretch reads GKEGP. 2 intramembrane regions (helical) span residues 201–213 and 217–225; these read ILTVGCALGISCC and PLAGVLFSI. Helical transmembrane passes span 237-254, 283-311, and 320-339; these read YWRGFLGGAFSAFIFRVL, LPAFAIIGIASGFFGALFVYLNRQIIVFM, and ILKKQRLIYPAVVTFVLATL. Asparagine 365 carries an N-linked (GlcNAc...) asparagine glycan. A run of 2 helical transmembrane segments spans residues 389 to 408 and 416 to 439; these read NIFIVMALYFVMHFWMAALA and GAFVPVFNLGAVLGRFVGELMALL. The short motif at 416–420 is the Selectivity filter part_3 element; the sequence is GAFVP. Phenylalanine 418 contacts chloride. The helical intramembrane region spans 456–470; sequence GEYAVIGAAAMTGAV. Positions 471-472 form an intramembrane region, note=Loop between two helices; the sequence is TH. An intramembrane region (helical) is located at residues 473-484; the sequence is AVSTAVICFELT. The note=Loop between two helices intramembrane region spans 485-489; the sequence is GQISH. A helical transmembrane segment spans residues 490-506; the sequence is VLPMMVAVILANMVAQG. At 507–810 the chain is on the cytoplasmic side; it reads LQPSLYDSII…RTATSNSSGK (304 aa). Tyrosine 512 provides a ligand contact to chloride. Positions 543–601 constitute a CBS 1 domain; the sequence is MVRDVTSIASTSTYGDLLHVLRQTKLKFFPFVDTPETNTLLGSIERTEVEGLLQRRISA. Disordered regions lie at residues 604–631 and 658–688; these read RQPATAAEAEEEGRNGERGASFTGDVPG and KVQTEDPRPPSPVPAEEPTQTSGIYQKKHKG. In terms of domain architecture, CBS 2 spans 724 to 781; it reads IDQSPFQLVEGTSLQKTHTLFSLLGLDRAYVTSMGKLVGVVALAEIQAAIEGSYQKGF.

This sequence belongs to the chloride channel (TC 2.A.49) family. ClC-0 subfamily. Homodimer. Each subunit has channel activity ('Double barreled channel').

Its subcellular location is the membrane. In terms of biological role, voltage-gated chloride channel. This channel is thought to ensure the high conductance of the non-innervated membrane of the electrocyte necessary for efficient current generation caused by sodium influx through the acetylcholine receptor at the innervated membrane. The chain is Chloride channel protein from Tetronarce californica (Pacific electric ray).